The chain runs to 337 residues: tRNA N6-adenosine threonylcarbamoyltransferase (337 aa).

Fe cation contacts are provided by H111 and H115. Substrate-binding positions include 134 to 138 (LVSGG), D167, G180, and N272. A Fe cation-binding site is contributed by D300.

This sequence belongs to the KAE1 / TsaD family. It depends on Fe(2+) as a cofactor.

It localises to the cytoplasm. It catalyses the reaction L-threonylcarbamoyladenylate + adenosine(37) in tRNA = N(6)-L-threonylcarbamoyladenosine(37) in tRNA + AMP + H(+). Required for the formation of a threonylcarbamoyl group on adenosine at position 37 (t(6)A37) in tRNAs that read codons beginning with adenine. Is involved in the transfer of the threonylcarbamoyl moiety of threonylcarbamoyl-AMP (TC-AMP) to the N6 group of A37, together with TsaE and TsaB. TsaD likely plays a direct catalytic role in this reaction. This chain is tRNA N6-adenosine threonylcarbamoyltransferase, found in Enterobacter sp. (strain 638).